A 144-amino-acid polypeptide reads, in one-letter code: Transcription antitermination protein NusB (144 aa).

Belongs to the NusB family.

Involved in transcription antitermination. Required for transcription of ribosomal RNA (rRNA) genes. Binds specifically to the boxA antiterminator sequence of the ribosomal RNA (rrn) operons. In Streptomyces avermitilis (strain ATCC 31267 / DSM 46492 / JCM 5070 / NBRC 14893 / NCIMB 12804 / NRRL 8165 / MA-4680), this protein is Transcription antitermination protein NusB.